We begin with the raw amino-acid sequence, 203 residues long: Large ribosomal subunit protein bL25 (203 aa).

Positions 182–203 (EITEEPETEEKKEEGASSVSNS) are disordered.

It belongs to the bacterial ribosomal protein bL25 family. CTC subfamily. As to quaternary structure, part of the 50S ribosomal subunit; part of the 5S rRNA/L5/L18/L25 subcomplex. Contacts the 5S rRNA. Binds to the 5S rRNA independently of L5 and L18.

Functionally, this is one of the proteins that binds to the 5S RNA in the ribosome where it forms part of the central protuberance. The chain is Large ribosomal subunit protein bL25 from Caldicellulosiruptor saccharolyticus (strain ATCC 43494 / DSM 8903 / Tp8T 6331).